The chain runs to 290 residues: GTPase Era (290 aa).

The Era-type G domain maps to 2 to 169 (KSGFAAILGR…KNKIYENFSE (168 aa)). The interval 10 to 17 (GRPSTGKS) is G1. Residue 10 to 17 (GRPSTGKS) coordinates GTP. Residues 36 to 40 (QTTRN) are G2. Positions 57 to 60 (DTPG) are G3. Residues 57–61 (DTPGF) and 119–122 (NKVD) contribute to the GTP site. The segment at 119–122 (NKVD) is G4. The tract at residues 148–150 (ISA) is G5. In terms of domain architecture, KH type-2 spans 200–276 (LKEELPYSLY…NLFLQVKLKK (77 aa)).

The protein belongs to the TRAFAC class TrmE-Era-EngA-EngB-Septin-like GTPase superfamily. Era GTPase family. As to quaternary structure, monomer.

The protein resides in the cytoplasm. It is found in the cell inner membrane. An essential GTPase that binds both GDP and GTP, with rapid nucleotide exchange. Plays a role in 16S rRNA processing and 30S ribosomal subunit biogenesis and possibly also in cell cycle regulation and energy metabolism. The sequence is that of GTPase Era from Borrelia garinii subsp. bavariensis (strain ATCC BAA-2496 / DSM 23469 / PBi) (Borreliella bavariensis).